The sequence spans 177 residues: NADH-quinone oxidoreductase subunit B (177 aa).

The [4Fe-4S] cluster site is built by Cys-56, Cys-57, Cys-121, and Cys-151.

Belongs to the complex I 20 kDa subunit family. NDH-1 is composed of 14 different subunits. Subunits NuoB, C, D, E, F, and G constitute the peripheral sector of the complex. [4Fe-4S] cluster is required as a cofactor.

The protein localises to the cell inner membrane. The catalysed reaction is a quinone + NADH + 5 H(+)(in) = a quinol + NAD(+) + 4 H(+)(out). NDH-1 shuttles electrons from NADH, via FMN and iron-sulfur (Fe-S) centers, to quinones in the respiratory chain. Couples the redox reaction to proton translocation (for every two electrons transferred, four hydrogen ions are translocated across the cytoplasmic membrane), and thus conserves the redox energy in a proton gradient. This is NADH-quinone oxidoreductase subunit B from Dinoroseobacter shibae (strain DSM 16493 / NCIMB 14021 / DFL 12).